Consider the following 162-residue polypeptide: Protein lon-8 (162 aa).

A signal peptide spans 1-23; it reads MRNSRFCAILAVISAISVSYVLA.

Its subcellular location is the secreted. Its function is as follows. Secreted protein that is involved in larval elongation, early adult growth and male tail development. In Caenorhabditis elegans, this protein is Protein lon-8.